The primary structure comprises 55 residues: Large ribosomal subunit protein bL33 (55 aa).

The protein belongs to the bacterial ribosomal protein bL33 family.

This is Large ribosomal subunit protein bL33 from Sodalis glossinidius (strain morsitans).